The chain runs to 346 residues: 4-hydroxy-2-oxovalerate aldolase 2 (346 aa).

Residues 8-260 (VTVHDMTLRD…ETGVDVFKIQ (253 aa)) form the Pyruvate carboxyltransferase domain. 16–17 (RD) is a binding site for substrate. Asp-17 lines the Mn(2+) pocket. The Proton acceptor role is filled by His-20. Residues Ser-170 and His-199 each coordinate substrate. Mn(2+)-binding residues include His-199 and His-201. A substrate-binding site is contributed by Tyr-290.

Belongs to the 4-hydroxy-2-oxovalerate aldolase family.

It carries out the reaction (S)-4-hydroxy-2-oxopentanoate = acetaldehyde + pyruvate. The protein is 4-hydroxy-2-oxovalerate aldolase 2 (bphX3) of Metapseudomonas furukawaii (Pseudomonas furukawaii).